The primary structure comprises 122 residues: WUSCHEL-related homeobox 7 (122 aa).

The homeobox; WUS-type DNA-binding region spans 25 to 89; that stretch reads AKCGRWNPTV…NHKARERQKC (65 aa). The segment covering 98–111 has biased composition (basic and acidic residues); that stretch reads DHRQDTDLSKPRRD. The disordered stretch occupies residues 98–122; sequence DHRQDTDLSKPRRDNVRRHQLPAKG. Residues 112 to 122 are compositionally biased toward basic residues; it reads NVRRHQLPAKG.

Belongs to the WUS homeobox family.

It is found in the nucleus. In terms of biological role, potential transcription factor that plays a central role during developmental processes. The chain is WUSCHEL-related homeobox 7 (WOX7) from Arabidopsis thaliana (Mouse-ear cress).